A 179-amino-acid polypeptide reads, in one-letter code: ATP synthase subunit delta (179 aa).

Belongs to the ATPase delta chain family. F-type ATPases have 2 components, F(1) - the catalytic core - and F(0) - the membrane proton channel. F(1) has five subunits: alpha(3), beta(3), gamma(1), delta(1), epsilon(1). F(0) has three main subunits: a(1), b(2) and c(10-14). The alpha and beta chains form an alternating ring which encloses part of the gamma chain. F(1) is attached to F(0) by a central stalk formed by the gamma and epsilon chains, while a peripheral stalk is formed by the delta and b chains.

Its subcellular location is the cell inner membrane. In terms of biological role, f(1)F(0) ATP synthase produces ATP from ADP in the presence of a proton or sodium gradient. F-type ATPases consist of two structural domains, F(1) containing the extramembraneous catalytic core and F(0) containing the membrane proton channel, linked together by a central stalk and a peripheral stalk. During catalysis, ATP synthesis in the catalytic domain of F(1) is coupled via a rotary mechanism of the central stalk subunits to proton translocation. This protein is part of the stalk that links CF(0) to CF(1). It either transmits conformational changes from CF(0) to CF(1) or is implicated in proton conduction. This chain is ATP synthase subunit delta, found in Koribacter versatilis (strain Ellin345).